Consider the following 127-residue polypeptide: Large ribosomal subunit protein bL17 (127 aa).

Belongs to the bacterial ribosomal protein bL17 family. As to quaternary structure, part of the 50S ribosomal subunit. Contacts protein L32.

The chain is Large ribosomal subunit protein bL17 from Lactiplantibacillus plantarum (strain ATCC BAA-793 / NCIMB 8826 / WCFS1) (Lactobacillus plantarum).